We begin with the raw amino-acid sequence, 250 residues long: Probable dihydroorotate dehydrogenase B (NAD(+)), electron transfer subunit (250 aa).

One can recognise an FAD-binding FR-type domain in the interval 1–89; the sequence is MNRITVDQVR…RGPYGNGFQI (89 aa). [2Fe-2S] cluster contacts are provided by Cys-200, Cys-205, Cys-208, and Cys-216.

Belongs to the PyrK family. Heterotetramer of 2 PyrK and 2 PyrD type B subunits. [2Fe-2S] cluster serves as cofactor. Requires FAD as cofactor.

Its pathway is pyrimidine metabolism; UMP biosynthesis via de novo pathway; orotate from (S)-dihydroorotate (NAD(+) route): step 1/1. Responsible for channeling the electrons from the oxidation of dihydroorotate from the FMN redox center in the PyrD type B subunit to the ultimate electron acceptor NAD(+). In Thermoplasma acidophilum (strain ATCC 25905 / DSM 1728 / JCM 9062 / NBRC 15155 / AMRC-C165), this protein is Probable dihydroorotate dehydrogenase B (NAD(+)), electron transfer subunit.